Reading from the N-terminus, the 343-residue chain is METSKKLVIVAVLSITLILTYAYLISIIEGVDYFTALYFSVITITTTGYGDFTPKTFLGRTLTVVYLCVGVGIVMYLFSLIAEFIVEGKFEEFVRLKKMKNKIKTLKDHYIICGYGRLGKVVGEKFIEENIPFIAIDINEDVLKEEYEKYPDKFLYIVGDAKKEEVLKKAKIDKAKGLIATLPSDADNVFLTLTARELNPNILITAKADEKEAIRKLKIAGANRVVSPYLIGGLRMAEVSVRPGILDFLSTFIKIAKDEYEEDIELRKFVIEKDSELAYKSLKDANIRGKTGATILGIRREKEFCINPYPEFILKPGDVIYAFGTEENLKYLENLVKKKKKKL.

The Cytoplasmic segment spans residues 1 to 7 (METSKKL). Residues 8–28 (VIVAVLSITLILTYAYLISII) traverse the membrane as a helical segment. The Extracellular segment spans residues 29–61 (EGVDYFTALYFSVITITTTGYGDFTPKTFLGRT). Residues 46 to 51 (TTGYGD) carry the Selectivity filter motif. A helical transmembrane segment spans residues 62–82 (LTVVYLCVGVGIVMYLFSLIA). Topologically, residues 83–343 (EFIVEGKFEE…NLVKKKKKKL (261 aa)) are cytoplasmic. In terms of domain architecture, RCK N-terminal spans 107 to 227 (KDHYIICGYG…KIAGANRVVS (121 aa)). The region spanning 253-338 (IKIAKDEYEE…LKYLENLVKK (86 aa)) is the RCK C-terminal domain.

It is found in the cell membrane. Its function is as follows. Probable potassium channel protein. This Methanocaldococcus jannaschii (strain ATCC 43067 / DSM 2661 / JAL-1 / JCM 10045 / NBRC 100440) (Methanococcus jannaschii) protein is Probable potassium channel protein 2.